The sequence spans 380 residues: Erythronate-4-phosphate dehydrogenase (380 aa).

S45 and T66 together coordinate substrate. Residues D146, T174, 205 to 207, and D231 each bind NAD(+); that span reads ASR. R207 is a catalytic residue. Residue E236 is part of the active site. Catalysis depends on H253, which acts as the Proton donor. Residue G256 participates in NAD(+) binding. Y257 contacts substrate.

The protein belongs to the D-isomer specific 2-hydroxyacid dehydrogenase family. PdxB subfamily. Homodimer.

The protein resides in the cytoplasm. The catalysed reaction is 4-phospho-D-erythronate + NAD(+) = (R)-3-hydroxy-2-oxo-4-phosphooxybutanoate + NADH + H(+). The protein operates within cofactor biosynthesis; pyridoxine 5'-phosphate biosynthesis; pyridoxine 5'-phosphate from D-erythrose 4-phosphate: step 2/5. Functionally, catalyzes the oxidation of erythronate-4-phosphate to 3-hydroxy-2-oxo-4-phosphonooxybutanoate. The protein is Erythronate-4-phosphate dehydrogenase of Pseudomonas putida (strain GB-1).